The chain runs to 804 residues: Leucine--tRNA ligase (804 aa).

Residues 40 to 51 carry the 'HIGH' region motif; sequence PYPSGAGLHVGH. Residues 576–580 carry the 'KMSKS' region motif; sequence KMSKS. Lys-579 is an ATP binding site.

The protein belongs to the class-I aminoacyl-tRNA synthetase family.

Its subcellular location is the cytoplasm. It catalyses the reaction tRNA(Leu) + L-leucine + ATP = L-leucyl-tRNA(Leu) + AMP + diphosphate. The polypeptide is Leucine--tRNA ligase (Staphylococcus haemolyticus (strain JCSC1435)).